The following is a 200-amino-acid chain: Peroxiredoxin (200 aa).

A Thioredoxin domain is found at A6 to F166. C52 acts as the Cysteine sulfenic acid (-SOH) intermediate in catalysis.

Belongs to the peroxiredoxin family. AhpC/Prx1 subfamily. Homodimer; disulfide-linked, upon oxidation.

It carries out the reaction a hydroperoxide + [thioredoxin]-dithiol = an alcohol + [thioredoxin]-disulfide + H2O. Thiol-specific peroxidase that catalyzes the reduction of hydrogen peroxide and organic hydroperoxides to water and alcohols, respectively. Plays a role in cell protection against oxidative stress by detoxifying peroxides and as sensor of hydrogen peroxide-mediated signaling events. The sequence is that of Peroxiredoxin from Oncorhynchus mykiss (Rainbow trout).